Here is a 209-residue protein sequence, read N- to C-terminus: V-type ATP synthase subunit D (209 aa).

The protein belongs to the V-ATPase D subunit family.

In terms of biological role, produces ATP from ADP in the presence of a proton gradient across the membrane. This Anaeromyxobacter dehalogenans (strain 2CP-1 / ATCC BAA-258) protein is V-type ATP synthase subunit D.